Reading from the N-terminus, the 259-residue chain is Protein GrpE (259 aa).

2 disordered regions span residues 1 to 74 and 228 to 259; these read MNSD…IKGS and PGPKVINEEIPDQSASNQELSESVDGSTKDEN. The segment covering 17 to 40 has biased composition (low complexity); the sequence is SSQNNPSENSVSSPNSNESVNQVE. Composition is skewed to polar residues over residues 56 to 73 and 240 to 253; these read VDTANEQSSTSCESNIKG and QSASNQELSESVDG.

This sequence belongs to the GrpE family. In terms of assembly, homodimer.

It localises to the cytoplasm. In terms of biological role, participates actively in the response to hyperosmotic and heat shock by preventing the aggregation of stress-denatured proteins, in association with DnaK and GrpE. It is the nucleotide exchange factor for DnaK and may function as a thermosensor. Unfolded proteins bind initially to DnaJ; upon interaction with the DnaJ-bound protein, DnaK hydrolyzes its bound ATP, resulting in the formation of a stable complex. GrpE releases ADP from DnaK; ATP binding to DnaK triggers the release of the substrate protein, thus completing the reaction cycle. Several rounds of ATP-dependent interactions between DnaJ, DnaK and GrpE are required for fully efficient folding. The chain is Protein GrpE from Prochlorococcus marinus (strain NATL2A).